The primary structure comprises 245 residues: 5-oxoprolinase subunit A (245 aa).

It belongs to the LamB/PxpA family. In terms of assembly, forms a complex composed of PxpA, PxpB and PxpC.

It catalyses the reaction 5-oxo-L-proline + ATP + 2 H2O = L-glutamate + ADP + phosphate + H(+). Catalyzes the cleavage of 5-oxoproline to form L-glutamate coupled to the hydrolysis of ATP to ADP and inorganic phosphate. The sequence is that of 5-oxoprolinase subunit A from Erwinia tasmaniensis (strain DSM 17950 / CFBP 7177 / CIP 109463 / NCPPB 4357 / Et1/99).